Here is a 1828-residue protein sequence, read N- to C-terminus: Chromodomain-helicase-DNA-binding protein 2 (1828 aa).

A compositionally biased stretch (basic and acidic residues) spans 1–14; that stretch reads MMRNKDKSQEEDSS. A disordered region spans residues 1 to 243; sequence MMRNKDKSQE…EDDDFETDSD (243 aa). The segment covering 15–75 has biased composition (low complexity); the sequence is LHSNASSHSA…SESESAGSKS (61 aa). Composition is skewed to basic and acidic residues over residues 81–101, 115–128, and 146–155; these read EAKE…KMWE, SRQE…KEEA, and KKQEKWKQEP. Residues 175 to 204 show a composition bias toward basic residues; the sequence is VKARRPVPRRTVPKPRVKKQPKTQRGKRKK. Serine 207 and serine 208 each carry phosphoserine. The segment covering 234–243 has biased composition (acidic residues); it reads EDDDFETDSD. Threonine 240 is subject to Phosphothreonine. The residue at position 242 (serine 242) is a Phosphoserine. Chromo domains follow at residues 261 to 353 and 378 to 456; these read ETIE…QWLG and QIVE…IPTR. The region spanning 496-666 is the Helicase ATP-binding domain; it reads AHSWCKNNSV…WSLLHFIMPE (171 aa). 509–516 lines the ATP pocket; the sequence is DEMGLGKT. A DEAH box motif is present at residues 617–620; that stretch reads DEAH. One can recognise a Helicase C-terminal domain in the interval 795–946; the sequence is LLDKLLTRLR…HLVIQRMDTT (152 aa). Disordered stretches follow at residues 1030-1124, 1331-1462, 1556-1638, and 1680-1828; these read EDEE…RSVR, VTGG…DEDD, HKKR…ADRG, and HMDA…VRKT. Residues 1037–1065 are compositionally biased toward basic and acidic residues; it reads ERPHKDWDEIIPEEQRKKVEEEERQKELE. Phosphoserine is present on residues serine 1085, serine 1087, serine 1365, and serine 1386. Positions 1347–1371 are enriched in basic and acidic residues; the sequence is KKENKVPRLKEEHGIELSSPRHSDN. Basic and acidic residues-rich tracts occupy residues 1396-1431 and 1565-1574; these read ENKE…KSGD and EQKKKDDVTG. The segment at 1464–1566 is CHD1 helical C-terminal domain (CHCT); that stretch reads LDQETFSICK…KKRSQEEEEQ (103 aa). Polar residues predominate over residues 1584–1601; it reads SGSSRDSLISQSHTSHNL. Basic and acidic residues-rich tracts occupy residues 1698-1720, 1739-1749, 1760-1772, and 1795-1814; these read RPYD…DRHH, QDFRRMSDHRP, DHYR…KLGE, and SPHD…RSLE. Residue serine 1807 is modified to Phosphoserine.

It belongs to the SNF2/RAD54 helicase family. Interacts with MYOD1. Interacts with histone H3.3.

It localises to the nucleus. The enzyme catalyses ATP + H2O = ADP + phosphate + H(+). In terms of biological role, ATP-dependent chromatin-remodeling factor that specifically binds to the promoter of target genes, leading to chromatin remodeling, possibly by promoting deposition of histone H3.3. Involved in myogenesis via interaction with MYOD1: binds to myogenic gene regulatory sequences and mediates incorporation of histone H3.3 prior to the onset of myogenic gene expression, promoting their expression. This is Chromodomain-helicase-DNA-binding protein 2 (CHD2) from Homo sapiens (Human).